The sequence spans 211 residues: Claudin-1 (211 aa).

The Cytoplasmic segment spans residues 1-7; it reads MANAGLQ. The helical transmembrane segment at 8–28 threads the bilayer; it reads LLGFILASLGWIGSIVSTALP. Residues 29–81 lie on the Extracellular side of the membrane; sequence QWKIYSYAGDNIVTAQAIYEGLWMSCVSQSTGQIQCKVFDSLLNLNSTLQATR. Cysteine 54 and cysteine 64 form a disulfide bridge. The chain crosses the membrane as a helical span at residues 82 to 102; it reads ALMVIGILLGLIAIFVSTIGM. At 103 to 115 the chain is on the cytoplasmic side; sequence KCMRCLEDDEVQK. The chain crosses the membrane as a helical span at residues 116-136; sequence MWMAVIGGIIFLISGLATLVA. Residues 137–163 lie on the Extracellular side of the membrane; it reads TAWYGNRIVQEFYDPLTPINARYEFGQ. A helical transmembrane segment spans residues 164–184; sequence ALFTGWAAASLCLLGGVLLSC. Residues 185–211 are Cytoplasmic-facing; that stretch reads SCPRKTTSYPTPRPYPKPTPSSGKDYV. The segment at 190-211 is disordered; sequence TTSYPTPRPYPKPTPSSGKDYV. The interval 210–211 is interactions with TJP1, TJP2, TJP3 and PATJ; it reads YV.

Belongs to the claudin family. Can form homo- and heteropolymers with other CLDN. Homopolymers interact with CLDN3, but not CLDN2, homopolymers. Directly interacts with TJP1/ZO-1, TJP2/ZO-2 and TJP3/ZO-3. Interacts with MPDZ and PATJ. Interacts with OCLN, CD81, CLDN4, CLDN6 and CLDN9. In terms of tissue distribution, detected in epidermis and liver (at protein level). Widely expressed, with highest levels in liver and kidney.

The protein localises to the cell junction. It localises to the tight junction. The protein resides in the cell membrane. Its subcellular location is the basolateral cell membrane. Its function is as follows. Claudins function as major constituents of the tight junction complexes that regulate the permeability of epithelia. While some claudin family members play essential roles in the formation of impermeable barriers, others mediate the permeability to ions and small molecules. Often, several claudin family members are coexpressed and interact with each other, and this determines the overall permeability. CLDN1 is required to prevent the paracellular diffusion of small molecules through tight junctions in the epidermis and is required for the normal barrier function of the skin. Required for normal water homeostasis and to prevent excessive water loss through the skin, probably via an indirect effect on the expression levels of other proteins, since CLDN1 itself seems to be dispensable for water barrier formation in keratinocyte tight junctions. The protein is Claudin-1 (Cldn1) of Mus musculus (Mouse).